Here is a 369-residue protein sequence, read N- to C-terminus: Peptide chain release factor 2 (369 aa).

The residue at position 251 (Gln-251) is an N5-methylglutamine.

Belongs to the prokaryotic/mitochondrial release factor family. In terms of processing, methylated by PrmC. Methylation increases the termination efficiency of RF2.

Its subcellular location is the cytoplasm. Peptide chain release factor 2 directs the termination of translation in response to the peptide chain termination codons UGA and UAA. This is Peptide chain release factor 2 from Campylobacter fetus subsp. fetus (strain 82-40).